A 164-amino-acid polypeptide reads, in one-letter code: 2S seed storage protein 1 (164 aa).

An N-terminal signal peptide occupies residues 1–21; sequence MANKLFLVCAALALCFLLTNA. 3 consecutive propeptides follow at residues 22–37, 74–83, and 163–164; these read SIYR…DATN, EFDFEDDMEN, and FY.

This sequence belongs to the 2S seed storage albumins family. The mature protein consists of a small and a large chain linked by disulfide bonds.

This is a 2S seed storage protein. This is 2S seed storage protein 1 (AT2S1) from Arabidopsis thaliana (Mouse-ear cress).